The chain runs to 430 residues: Aspartate aminotransferase, mitochondrial (430 aa).

The transit peptide at 1 to 29 directs the protein to the mitochondrion; that stretch reads MALLHSSRILSGMAAAFHPGLAAAASARA. Position 48 is a phosphothreonine (Thr-48). Lys-59 bears the N6-acetyllysine mark. Gly-65 contributes to the substrate binding site. An N6-acetyllysine; alternate modification is found at Lys-73. Lys-73 carries the post-translational modification N6-succinyllysine; alternate. Lys-82 carries the N6-acetyllysine modification. Lys-90 carries the N6-acetyllysine; alternate modification. Position 90 is an N6-succinyllysine; alternate (Lys-90). Tyr-96 bears the 3'-nitrotyrosine; alternate mark. Position 96 is a phosphotyrosine; alternate (Tyr-96). 2 positions are modified to N6-acetyllysine; alternate: Lys-107 and Lys-122. N6-succinyllysine; alternate is present on residues Lys-107 and Lys-122. Ser-143 is modified (phosphoserine). Lys-159 carries the post-translational modification N6-acetyllysine; alternate. An N6-succinyllysine; alternate modification is found at Lys-159. Trp-162 provides a ligand contact to substrate. An N6-acetyllysine; alternate modification is found at Lys-185. Lys-185 is subject to N6-succinyllysine; alternate. Residue Asn-215 participates in substrate binding. Lys-227 is modified (N6-succinyllysine). Lys-234 carries the N6-acetyllysine modification. N6-acetyllysine; alternate is present on residues Lys-279 and Lys-296. Position 279 is an N6-(pyridoxal phosphate)lysine; alternate (Lys-279). Position 296 is an N6-succinyllysine; alternate (Lys-296). Residue Lys-302 is modified to N6-acetyllysine. N6-acetyllysine; alternate is present on Lys-309. An N6-succinyllysine; alternate modification is found at Lys-309. Arg-313 is subject to Asymmetric dimethylarginine. Lys-338 bears the N6-acetyllysine; alternate mark. The residue at position 338 (Lys-338) is an N6-succinyllysine; alternate. At Lys-345 the chain carries N6-acetyllysine. Residue Lys-363 is modified to N6-acetyllysine; alternate. The residue at position 363 (Lys-363) is an N6-succinyllysine; alternate. N6-acetyllysine occurs at positions 364 and 387. An N6-acetyllysine; alternate mark is found at Lys-396 and Lys-404. Residues Lys-396 and Lys-404 each carry the N6-succinyllysine; alternate modification. Arg-407 provides a ligand contact to substrate.

The protein belongs to the class-I pyridoxal-phosphate-dependent aminotransferase family. In terms of assembly, homodimer. Pyridoxal 5'-phosphate serves as cofactor. In terms of processing, acetylation of Lys-296, Lys-345 and Lys-363 is observed in liver mitochondria from fasted mice but not from fed mice. Detected in brain (at protein level).

The protein localises to the mitochondrion matrix. It localises to the cell membrane. It carries out the reaction L-aspartate + 2-oxoglutarate = oxaloacetate + L-glutamate. It catalyses the reaction L-kynurenine + 2-oxoglutarate = kynurenate + L-glutamate + H2O. Catalyzes the irreversible transamination of the L-tryptophan metabolite L-kynurenine to form kynurenic acid (KA). As a member of the malate-aspartate shuttle, it has a key role in the intracellular NAD(H) redox balance. Is important for metabolite exchange between mitochondria and cytosol, and for amino acid metabolism. Facilitates cellular uptake of long-chain free fatty acids. This chain is Aspartate aminotransferase, mitochondrial (Got2), found in Mus musculus (Mouse).